A 482-amino-acid polypeptide reads, in one-letter code: Probable cytosol aminopeptidase (482 aa).

2 residues coordinate Mn(2+): lysine 251 and aspartate 256. Lysine 263 is an active-site residue. Residues aspartate 274, aspartate 333, and glutamate 335 each contribute to the Mn(2+) site. Residue arginine 337 is part of the active site.

This sequence belongs to the peptidase M17 family. The cofactor is Mn(2+).

It localises to the cytoplasm. The enzyme catalyses Release of an N-terminal amino acid, Xaa-|-Yaa-, in which Xaa is preferably Leu, but may be other amino acids including Pro although not Arg or Lys, and Yaa may be Pro. Amino acid amides and methyl esters are also readily hydrolyzed, but rates on arylamides are exceedingly low.. The catalysed reaction is Release of an N-terminal amino acid, preferentially leucine, but not glutamic or aspartic acids.. Presumably involved in the processing and regular turnover of intracellular proteins. Catalyzes the removal of unsubstituted N-terminal amino acids from various peptides. The protein is Probable cytosol aminopeptidase of Acinetobacter baumannii (strain SDF).